Consider the following 116-residue polypeptide: Phosphoribosyl-AMP cyclohydrolase (116 aa).

Aspartate 78 contributes to the Mg(2+) binding site. Cysteine 79 is a binding site for Zn(2+). Positions 80 and 82 each coordinate Mg(2+). Zn(2+) contacts are provided by cysteine 95 and cysteine 102.

This sequence belongs to the PRA-CH family. As to quaternary structure, homodimer. It depends on Mg(2+) as a cofactor. Zn(2+) serves as cofactor.

The protein localises to the cytoplasm. It catalyses the reaction 1-(5-phospho-beta-D-ribosyl)-5'-AMP + H2O = 1-(5-phospho-beta-D-ribosyl)-5-[(5-phospho-beta-D-ribosylamino)methylideneamino]imidazole-4-carboxamide. The protein operates within amino-acid biosynthesis; L-histidine biosynthesis; L-histidine from 5-phospho-alpha-D-ribose 1-diphosphate: step 3/9. Functionally, catalyzes the hydrolysis of the adenine ring of phosphoribosyl-AMP. This chain is Phosphoribosyl-AMP cyclohydrolase, found in Acidiphilium cryptum (strain JF-5).